The following is a 152-amino-acid chain: MPLKFGLIVATAALIASAASLMAADHQVQMLNKGTDGAMVFEPGFLKIAPGDTVTFIPTDKSHNVETFKGLIPDGVPDFKSKPNEQYQVKFDIPGAYVLKCTPHVGMGMVALIQVGDNPANLEPIKIAKVPNMVRKRLDADLAQITPAQITQ.

Residues 1-23 form the signal peptide; it reads MPLKFGLIVATAALIASAASLMA. The Plastocyanin-like domain maps to 28-116; that stretch reads VQMLNKGTDG…MGMVALIQVG (89 aa). His63, Cys101, His104, and Met109 together coordinate Cu cation.

It depends on Cu cation as a cofactor.

It is found in the periplasm. Functionally, this soluble electron transfer copper protein is required for the inactivation of copper-containing nitrite reductase in the presence of oxygen. The protein is Putative pseudoazurin (azu) of Rhizobium leguminosarum bv. viciae.